A 395-amino-acid chain; its full sequence is Subtilisin-like protease 9 (395 aa).

The first 20 residues, 1 to 20 (MGFFRTLFSFSIFALSLADT), serve as a signal peptide directing secretion. Residues 21 to 120 (SKFIGLDDVD…ADRVVKMAAL (100 aa)) constitute a propeptide that is removed on maturation. Residues 36 to 117 (SYIVVMKGAV…YVEADRVVKM (82 aa)) enclose the Inhibitor I9 domain. The Peptidase S8 domain maps to 128 to 395 (SWGLGRISHK…RRLLYNGSGA (268 aa)). Residues aspartate 160 and histidine 191 each act as charge relay system in the active site. The N-linked (GlcNAc...) asparagine glycan is linked to asparagine 252. Serine 341 (charge relay system) is an active-site residue. Residue asparagine 391 is glycosylated (N-linked (GlcNAc...) asparagine).

It belongs to the peptidase S8 family.

Its subcellular location is the secreted. Functionally, secreted subtilisin-like serine protease with keratinolytic activity that contributes to pathogenicity. The polypeptide is Subtilisin-like protease 9 (SUB9) (Arthroderma otae (strain ATCC MYA-4605 / CBS 113480) (Microsporum canis)).